The sequence spans 227 residues: Cytochrome c oxidase subunit 2 (227 aa).

At 1–14 the chain is on the mitochondrial intermembrane side; the sequence is MAYPFQLGFQDATS. Residues 15 to 45 form a helical membrane-spanning segment; it reads PIMEELLHFHDHTLMIVFLISSLVLYIITLM. The Mitochondrial matrix segment spans residues 46-59; that stretch reads LTTKLTHTSTMDAQ. Residues 60 to 87 traverse the membrane as a helical segment; sequence EVETVWTILPAIILILIALPSLRILYMM. Topologically, residues 88–227 are mitochondrial intermembrane; it reads DEVNNPSLTV…IFEKWSASML (140 aa). Positions 161, 196, 198, 200, 204, and 207 each coordinate Cu cation. Mg(2+) is bound at residue Glu198.

This sequence belongs to the cytochrome c oxidase subunit 2 family. Component of the cytochrome c oxidase (complex IV, CIV), a multisubunit enzyme composed of 14 subunits. The complex is composed of a catalytic core of 3 subunits MT-CO1, MT-CO2 and MT-CO3, encoded in the mitochondrial DNA, and 11 supernumerary subunits COX4I, COX5A, COX5B, COX6A, COX6B, COX6C, COX7A, COX7B, COX7C, COX8 and NDUFA4, which are encoded in the nuclear genome. The complex exists as a monomer or a dimer and forms supercomplexes (SCs) in the inner mitochondrial membrane with NADH-ubiquinone oxidoreductase (complex I, CI) and ubiquinol-cytochrome c oxidoreductase (cytochrome b-c1 complex, complex III, CIII), resulting in different assemblies (supercomplex SCI(1)III(2)IV(1) and megacomplex MCI(2)III(2)IV(2)). Found in a complex with TMEM177, COA6, COX18, COX20, SCO1 and SCO2. Interacts with TMEM177 in a COX20-dependent manner. Interacts with COX20. Interacts with COX16. Cu cation serves as cofactor.

It is found in the mitochondrion inner membrane. It carries out the reaction 4 Fe(II)-[cytochrome c] + O2 + 8 H(+)(in) = 4 Fe(III)-[cytochrome c] + 2 H2O + 4 H(+)(out). Component of the cytochrome c oxidase, the last enzyme in the mitochondrial electron transport chain which drives oxidative phosphorylation. The respiratory chain contains 3 multisubunit complexes succinate dehydrogenase (complex II, CII), ubiquinol-cytochrome c oxidoreductase (cytochrome b-c1 complex, complex III, CIII) and cytochrome c oxidase (complex IV, CIV), that cooperate to transfer electrons derived from NADH and succinate to molecular oxygen, creating an electrochemical gradient over the inner membrane that drives transmembrane transport and the ATP synthase. Cytochrome c oxidase is the component of the respiratory chain that catalyzes the reduction of oxygen to water. Electrons originating from reduced cytochrome c in the intermembrane space (IMS) are transferred via the dinuclear copper A center (CU(A)) of subunit 2 and heme A of subunit 1 to the active site in subunit 1, a binuclear center (BNC) formed by heme A3 and copper B (CU(B)). The BNC reduces molecular oxygen to 2 water molecules using 4 electrons from cytochrome c in the IMS and 4 protons from the mitochondrial matrix. The protein is Cytochrome c oxidase subunit 2 (MT-CO2) of Balaenoptera borealis (Sei whale).